A 211-amino-acid polypeptide reads, in one-letter code: ATP phosphoribosyltransferase (211 aa).

It belongs to the ATP phosphoribosyltransferase family. Short subfamily. Heteromultimer composed of HisG and HisZ subunits.

The protein localises to the cytoplasm. The catalysed reaction is 1-(5-phospho-beta-D-ribosyl)-ATP + diphosphate = 5-phospho-alpha-D-ribose 1-diphosphate + ATP. The protein operates within amino-acid biosynthesis; L-histidine biosynthesis; L-histidine from 5-phospho-alpha-D-ribose 1-diphosphate: step 1/9. In terms of biological role, catalyzes the condensation of ATP and 5-phosphoribose 1-diphosphate to form N'-(5'-phosphoribosyl)-ATP (PR-ATP). Has a crucial role in the pathway because the rate of histidine biosynthesis seems to be controlled primarily by regulation of HisG enzymatic activity. The polypeptide is ATP phosphoribosyltransferase (Hahella chejuensis (strain KCTC 2396)).